The sequence spans 520 residues: MENIEKLLMQEKILMLELDLVRAKISLARANGSSQQGDLPLHRETPVKEEAVHSALATFTPTQVKAIPEQTAPGKESTNPLMASILPKDMNPVQTGIRLAVPGDFLRPHQGIPIPQKSELSSIVAPLRAESGIHHPHINYYVVYNGPHAGIYDDWGCTKAATNGVPGVAYKKFATITEARAAADAYTTSQQTDRLNFIPKGEAQLKPKSFAKALTSPPKQKAHWLTLGTKRPSSDPAPKEISFAPEITMDDFLYLYDLGRKFDGEGDDTMFTTDNEKISLFNFRKNADPQMVREAYAAGLIKTIYPSNNLQEIKYLPKKVKDAVKRFRTNCIKNTEKDIFLKIRSTIPVWTIQGLLHKPRQVIEIGVSKKVVPTESKAMESKIQIEDLTELAVKTGEQFIQSLLRLNDKKKIFVNMVEHDTLVYSKNIKDTVSEDQRAIETFQQRVISGNLLGFHCPAICHFIKRTVEKEGGTYKCHHCDKGKAIVQDASADSGPKDGPPPTRSIVEKEDVPTTSSKQVD.

Residues 487–520 (QDASADSGPKDGPPPTRSIVEKEDVPTTSSKQVD) form a disordered region.

It belongs to the caulimoviridae viroplasmin family.

It is found in the host cytoplasm. Functionally, enhances the ribosomal termination-reinitiation event leading to the translation of major open reading frames on the polycistronic viral RNAs. The chain is Transactivator/viroplasmin protein from Cauliflower mosaic virus (strain CM-1841) (CaMV).